Here is a 109-residue protein sequence, read N- to C-terminus: Death-associated protein-like 1 homolog (109 aa).

Disordered regions lie at residues 1–51 (MVQL…KPRS) and 76–100 (FPETPVSVRHSRVRPSVEKPHISRI). Residues 31–50 (KSADENANVEKETRKTDKPR) are compositionally biased toward basic and acidic residues.

It belongs to the DAP-DAPL1 family. Associates with ribosomes; preventing translation. Interacts with eiF5a (eif5a and eif5a2); preventing translation.

Its function is as follows. Ribosome-binding protein that promotes ribosome hibernation, a process during which ribosomes are stabilized in an inactive state and preserved from proteasomal degradation. Acts via its association with eiF5a (eif5a and eif5a2) at the polypeptide exit tunnel of the ribosome, preventing mRNA translation. Plays a key role in ribosome hibernation in the mature egg by preventing mRNA translation, leading to ribosome inactivation. Ribosomes, which are produced in large quantities during oogenesis, are stored and translationally repressed in the egg and early embryo. This is Death-associated protein-like 1 homolog from Danio rerio (Zebrafish).